Consider the following 301-residue polypeptide: GTPase Era (301 aa).

One can recognise an Era-type G domain in the interval 7 to 175 (YCGFIAIVGR…AAIVRKHLPE (169 aa)). Residues 15–22 (GRPNVGKS) form a G1 region. 15 to 22 (GRPNVGKS) serves as a coordination point for GTP. Residues 41 to 45 (QTTRH) form a G2 region. The interval 62-65 (DTPG) is G3. GTP-binding positions include 62 to 66 (DTPGL) and 124 to 127 (NKVD). The tract at residues 124–127 (NKVD) is G4. The interval 154-156 (ISA) is G5. The 78-residue stretch at 206-283 (LGAELPYSVT…HLELWVKVKS (78 aa)) folds into the KH type-2 domain.

Belongs to the TRAFAC class TrmE-Era-EngA-EngB-Septin-like GTPase superfamily. Era GTPase family. In terms of assembly, monomer.

Its subcellular location is the cytoplasm. The protein localises to the cell inner membrane. Functionally, an essential GTPase that binds both GDP and GTP, with rapid nucleotide exchange. Plays a role in 16S rRNA processing and 30S ribosomal subunit biogenesis and possibly also in cell cycle regulation and energy metabolism. This chain is GTPase Era, found in Shigella flexneri serotype 5b (strain 8401).